Consider the following 319-residue polypeptide: tRNA N6-adenosine threonylcarbamoyltransferase (319 aa).

The Fe cation site is built by His-110 and His-114. Residues 135 to 139 (VVSGG), Asp-168, Gly-181, Asp-185, and Asn-277 contribute to the substrate site. A Fe cation-binding site is contributed by Asp-301.

This sequence belongs to the KAE1 / TsaD family. Fe(2+) serves as cofactor.

Its subcellular location is the cytoplasm. It catalyses the reaction L-threonylcarbamoyladenylate + adenosine(37) in tRNA = N(6)-L-threonylcarbamoyladenosine(37) in tRNA + AMP + H(+). Functionally, required for the formation of a threonylcarbamoyl group on adenosine at position 37 (t(6)A37) in tRNAs that read codons beginning with adenine. Is involved in the transfer of the threonylcarbamoyl moiety of threonylcarbamoyl-AMP (TC-AMP) to the N6 group of A37, together with TsaE and TsaB. TsaD likely plays a direct catalytic role in this reaction. The polypeptide is tRNA N6-adenosine threonylcarbamoyltransferase (Mycoplasma pneumoniae (strain ATCC 29342 / M129 / Subtype 1) (Mycoplasmoides pneumoniae)).